The sequence spans 627 residues: Endoglucanase 5 (627 aa).

An N-terminal signal peptide occupies residues 1–26 (MRKFGGSLFGVSLLLSVLLAAATAAA). Asp83 (nucleophile) is an active-site residue. Asn196 carries an N-linked (GlcNAc...) asparagine glycan. The active site involves His416. Asn465 is a glycosylation site (N-linked (GlcNAc...) asparagine). Residues Asp468 and Glu477 contribute to the active site. Asn561 carries N-linked (GlcNAc...) asparagine glycosylation.

This sequence belongs to the glycosyl hydrolase 9 (cellulase E) family.

Its subcellular location is the secreted. The catalysed reaction is Endohydrolysis of (1-&gt;4)-beta-D-glucosidic linkages in cellulose, lichenin and cereal beta-D-glucans.. This Arabidopsis thaliana (Mouse-ear cress) protein is Endoglucanase 5.